We begin with the raw amino-acid sequence, 227 residues long: PKHD-type hydroxylase NE2125 (227 aa).

The 102-residue stretch at 78-179 folds into the Fe2OG dioxygenase domain; that stretch reads KIVPPFFNRY…RLACFMFIQS (102 aa). H97, D99, and H160 together coordinate Fe cation. Position 170 (R170) interacts with 2-oxoglutarate.

The cofactor is Fe(2+). Requires L-ascorbate as cofactor.

This Nitrosomonas europaea (strain ATCC 19718 / CIP 103999 / KCTC 2705 / NBRC 14298) protein is PKHD-type hydroxylase NE2125.